The chain runs to 755 residues: Putative two-component response regulator-like APRR6 (755 aa).

The Response regulatory domain occupies 14 to 128 (SILLIDHDTA…DIKNMWQHVF (115 aa)).

This sequence belongs to the ARR-like family.

The protein resides in the nucleus. This Arabidopsis thaliana (Mouse-ear cress) protein is Putative two-component response regulator-like APRR6 (APRR6).